Reading from the N-terminus, the 440-residue chain is Transposon Ty1-JR1 Gag polyprotein (440 aa).

The span at 1–16 shows a compositional bias: low complexity; the sequence is MESQQLSQHSHISHGS. 3 disordered regions span residues 1 to 93, 126 to 173, and 352 to 440; these read MESQ…MMTQ, PQSQ…RPPP, and GSRN…PGTY. Composition is skewed to polar residues over residues 48–60 and 127–152; these read TKAN…TPAS and QSQF…GNTF. Residues 153–165 show a composition bias toward low complexity; it reads TDSSSADSDMTST. The RNA-binding stretch occupies residues 299 to 401; that stretch reads NNGIHINNKV…NSKSKTARAH (103 aa). Over residues 402–418 the composition is skewed to low complexity; that stretch reads NVSTSNNSPSTDNDSIS. Position 416 is a phosphoserine (serine 416). The span at 419 to 428 shows a compositional bias: polar residues; sequence KSTTEPIQLN. Over residues 429 to 440 the composition is skewed to basic and acidic residues; sequence NKHDLHLRPGTY.

In terms of assembly, homotrimer.

Its subcellular location is the cytoplasm. Its function is as follows. Capsid protein (CA) is the structural component of the virus-like particle (VLP), forming the shell that encapsulates the retrotransposons dimeric RNA genome. The particles are assembled from trimer-clustered units and there are holes in the capsid shells that allow for the diffusion of macromolecules. CA also has nucleocapsid-like chaperone activity, promoting primer tRNA(i)-Met annealing to the multipartite primer-binding site (PBS), dimerization of Ty1 RNA and initiation of reverse transcription. The chain is Transposon Ty1-JR1 Gag polyprotein (TY1A-JR1) from Saccharomyces cerevisiae (strain ATCC 204508 / S288c) (Baker's yeast).